We begin with the raw amino-acid sequence, 224 residues long: DNA mismatch repair protein MutH (224 aa).

It belongs to the MutH family.

It is found in the cytoplasm. In terms of biological role, sequence-specific endonuclease that cleaves unmethylated GATC sequences. It is involved in DNA mismatch repair. This chain is DNA mismatch repair protein MutH, found in Histophilus somni (strain 129Pt) (Haemophilus somnus).